A 94-amino-acid polypeptide reads, in one-letter code: PqqA binding protein (94 aa).

The protein belongs to the PqqD family. As to quaternary structure, monomer. Interacts with PqqE.

The protein operates within cofactor biosynthesis; pyrroloquinoline quinone biosynthesis. Functions as a PqqA binding protein and presents PqqA to PqqE, in the pyrroloquinoline quinone (PQQ) biosynthetic pathway. This chain is PqqA binding protein, found in Pseudomonas savastanoi pv. phaseolicola (strain 1448A / Race 6) (Pseudomonas syringae pv. phaseolicola (strain 1448A / Race 6)).